A 334-amino-acid polypeptide reads, in one-letter code: Cytoskeleton protein RodZ (334 aa).

Residues 1-111 lie on the Cytoplasmic side of the membrane; that stretch reads MNTEATHDQN…LGKRRKKRDG (111 aa). The HTH cro/C1-type domain maps to 19-71; the sequence is LRNAREQLGLSQQAVAERLCLKVSTVRDIEEDKAPSDLASTFLRGYIRSYARL. The segment at residues 30 to 49 is a DNA-binding region (H-T-H motif); that stretch reads QQAVAERLCLKVSTVRDIEE. Residues 112 to 132 traverse the membrane as a helical; Signal-anchor for type II membrane protein segment; that stretch reads WLMSFTWLVLFVVVGLTGAWW. The Periplasmic portion of the chain corresponds to 133 to 334; it reads WQNHKAQQEE…TLNAEPTPAQ (202 aa). Disordered regions lie at residues 155 to 207 and 221 to 241; these read NADK…ATQN and ATSA…SQAG. Over residues 176–207 the composition is skewed to low complexity; that stretch reads TTPAQTAPAPATPVDSTAATQTPAATATATQN.

Belongs to the RodZ family.

It is found in the cell inner membrane. Its function is as follows. Cytoskeletal protein that is involved in cell-shape control through regulation of the length of the long axis. In Salmonella schwarzengrund (strain CVM19633), this protein is Cytoskeleton protein RodZ.